Reading from the N-terminus, the 346-residue chain is MTVVIPEYITPLIPWVRGIVGLVLIGVIFMGAMGAVWLERKLSADIQTRMGPCRVGKYGLLQLVADAIKLFTKEDLKPLNADSLLFNNANIFMLGSVFLMLVALPVGAVFINGVEYPLAVTQMDISVLYIEAVSALSIFGIFMVAYGSNNKYSLLGAFRNFARMVGYEVPLGITVISVAAMTGSLNIVDISTAQGLHWNIFLQPLGCFVFFVSLMADMGRLPFDQNESEEELIAGWITEYCGMRFGLGFFAEYIHMILGSFLVALLFLGGWNVPGFIANNSFFGIIVPTGFLIVKVVFVLMVIIGLRWAVPRFRIDQVVDLSWKKLLPLALLNLVWAVGLGLYLGA.

Helical transmembrane passes span 18 to 38 (GIVG…AVWL), 91 to 111 (IFML…AVFI), 125 to 145 (ISVL…FMVA), 170 to 190 (PLGI…IVDI), 196 to 216 (LHWN…SLMA), 257 to 277 (ILGS…PGFI), 284 to 304 (GIIV…MVII), and 326 to 346 (LLPL…YLGA).

Belongs to the complex I subunit 1 family. In terms of assembly, the FPO complex is composed of at least 13 different subunits. FpoA, FpoH, FpoJ, FpoK, FpoL, FpoM and FpoN proteins constitute the membrane sector of the complex.

It is found in the cell membrane. It carries out the reaction methanophenazine + reduced coenzyme F420-(gamma-L-Glu)(n) = dihydromethanophenazine + oxidized coenzyme F420-(gamma-L-Glu)(n) + H(+). In terms of biological role, component of the F(420)H(2) dehydrogenase (FPO complex) which is part of the energy-conserving F(420)H(2):heterodisulfide oxidoreductase system. The membrane-bound electron transfer system of the complex plays an important role in the metabolism of methylotrophic methanogens when the organisms grow on methanol or methylamines. Catalyzes the oxidation of methanophenazine to dihydromethanophenazine. It shuttles electrons from F(420)H(2), via FAD and iron-sulfur (Fe-S) centers, to methanophenazine (an electron carrier in the membrane). It couples the redox reaction to proton translocation (for every two electrons transferred, two hydrogen ions are translocated across the cytoplasmic membrane), and thus conserves the redox energy in a proton gradient. This Methanosarcina barkeri (strain Fusaro / DSM 804) protein is F(420)H(2) dehydrogenase subunit H.